Consider the following 338-residue polypeptide: tRNA N6-adenosine threonylcarbamoyltransferase (338 aa).

Positions 110 and 114 each coordinate Fe cation. Substrate contacts are provided by residues leucine 132–glycine 136, aspartate 165, glycine 178, and asparagine 274. Fe cation is bound at residue aspartate 298.

Belongs to the KAE1 / TsaD family. It depends on Fe(2+) as a cofactor.

It is found in the cytoplasm. It carries out the reaction L-threonylcarbamoyladenylate + adenosine(37) in tRNA = N(6)-L-threonylcarbamoyladenosine(37) in tRNA + AMP + H(+). Required for the formation of a threonylcarbamoyl group on adenosine at position 37 (t(6)A37) in tRNAs that read codons beginning with adenine. Is involved in the transfer of the threonylcarbamoyl moiety of threonylcarbamoyl-AMP (TC-AMP) to the N6 group of A37, together with TsaE and TsaB. TsaD likely plays a direct catalytic role in this reaction. This is tRNA N6-adenosine threonylcarbamoyltransferase from Borrelia garinii subsp. bavariensis (strain ATCC BAA-2496 / DSM 23469 / PBi) (Borreliella bavariensis).